The chain runs to 136 residues: MPPKAADKKPAAKAPVASKAPEKKDAGKKTASTGEKKKRTKARRETYSSYIYKVLKQVHPDTGISNRAMSILNSFVNDIFERVATEASKLAAYNKKSTISSREIQTSVRLILPGELAKHAVSEGTKAVTKYSSSTK.

The segment covering 1-10 has biased composition (basic and acidic residues); the sequence is MPPKAADKKP. The interval 1-44 is disordered; the sequence is MPPKAADKKPAAKAPVASKAPEKKDAGKKTASTGEKKKRTKARR. Residues K8 and K9 each carry the N6-acetyllysine; alternate modification. Residues K8 and K9 each participate in a glycyl lysine isopeptide (Lys-Gly) (interchain with G-Cter in SUMO); alternate cross-link. The residue at position 13 (K13) is an N6-acetyllysine. Residue K23 is modified to N6-acetyllysine; alternate. K23 is covalently cross-linked (Glycyl lysine isopeptide (Lys-Gly) (interchain with G-Cter in SUMO); alternate). Residue K24 forms a Glycyl lysine isopeptide (Lys-Gly) (interchain with G-Cter in SUMO) linkage. K130 is covalently cross-linked (Glycyl lysine isopeptide (Lys-Gly) (interchain with G-Cter in ubiquitin)).

It belongs to the histone H2B family. In terms of assembly, the nucleosome is a histone octamer containing two molecules each of H2A, H2B, H3 and H4 assembled in one H3-H4 heterotetramer and two H2A-H2B heterodimers. The octamer wraps approximately 147 bp of DNA. Post-translationally, monoubiquitinated to form H2BK123ub1. H2BK123ub1 gives a specific tag for epigenetic transcriptional activation and is also prerequisite for H3K4me and H3K79me formation. H2BK123ub1 also modulates the formation of double-strand breaks during meiosis and is a prerequisite for DNA-damage checkpoint activation. In terms of processing, acetylated by GCN5 to form H2BK11ac and H2BK16ac. H2BK16ac can also be formed by ESA1. Acetylation of N-terminal lysines and particularly formation of H2BK11acK16ac has a positive effect on transcription. Sumoylation to form H2BK6su or H2BK7su, and probably also H2BK16su or H2BK17su, occurs preferentially near the telomeres and represses gene transcription.

It localises to the nucleus. The protein resides in the chromosome. Core component of nucleosome. Nucleosomes wrap and compact DNA into chromatin, limiting DNA accessibility to the cellular machineries which require DNA as a template. Histones thereby play a central role in transcription regulation, DNA repair, DNA replication and chromosomal stability. DNA accessibility is regulated via a complex set of post-translational modifications of histones, also called histone code, and nucleosome remodeling. This Rosellinia necatrix (White root-rot fungus) protein is Histone H2B (hh2b).